We begin with the raw amino-acid sequence, 446 residues long: Oxysterols receptor LXR-beta (446 aa).

A disordered region spans residues 1–69 (MSSPTSSLDT…PERKRKKGPA (69 aa)). Residues 1–76 (MSSPTSSLDT…GPAPKMLGHE (76 aa)) are transactivation AF-1; required for ligand-independent transactivation function. A compositionally biased stretch (low complexity) spans 17–28 (SPQPSTSATSPT). Positions 75 to 152 (HELCRVCGDK…AGMREQCVLS (78 aa)) form a DNA-binding region, nuclear receptor. 2 NR C4-type zinc fingers span residues 78–98 (CRVCGDKASGFHYNVLSCEGC) and 116–140 (CRGSGTCQMDAFMRRKCQLCRLRKC). Residues 159-201 (KRIQKQQQQQPPPPSEPAASSSGRPAASPGTSEASSQGSGEGE) form a disordered region. Positions 175 to 196 (PAASSSGRPAASPGTSEASSQG) are enriched in low complexity. Positions 205–446 (LTAAQELMIQ…LLSEIWDVHE (242 aa)) are transactivation AF-2; required for ligand-dependent transactivation function; mediates interaction with CCAR2. One can recognise an NR LBD domain in the interval 208 to 446 (AQELMIQQLV…LLSEIWDVHE (239 aa)). Glycyl lysine isopeptide (Lys-Gly) (interchain with G-Cter in SUMO2) cross-links involve residues Lys395 and Lys433.

Belongs to the nuclear hormone receptor family. NR1 subfamily. As to quaternary structure, forms a heterodimer with RXR. Interacts with CCAR2 (via N-terminus) in a ligand-independent manner. Interacts (when sumoylated) with GPS2; interaction with GPS2 onto hepatic acute phase protein promoters prevents N-Cor corepressor complex dissociation. Interacts with ABCA12 and ABCA1; this interaction is required for ABCA1 localization to the cell surface and is necessary for its normal activity and stability. Sumoylated by SUMO2 at Lys-395 and Lys-433 during the hepatic acute phase response, leading to promote interaction with GPS2 and prevent N-Cor corepressor complex dissociation. In terms of tissue distribution, ubiquitous.

It localises to the nucleus. Functionally, nuclear receptor that exhibits a ligand-dependent transcriptional activation activity. Binds preferentially to double-stranded oligonucleotide direct repeats having the consensus half-site sequence 5'-AGGTCA-3' and 4-nt spacing (DR-4). Regulates cholesterol uptake through MYLIP-dependent ubiquitination of LDLR, VLDLR and LRP8; DLDLR and LRP8. Interplays functionally with RORA for the regulation of genes involved in liver metabolism. Induces LPCAT3-dependent phospholipid remodeling in endoplasmic reticulum (ER) membranes of hepatocytes, driving SREBF1 processing and lipogenesis. Via LPCAT3, triggers the incorporation of arachidonate into phosphatidylcholines of ER membranes, increasing membrane dynamics and enabling triacylglycerols transfer to nascent very low-density lipoprotein (VLDL) particles. Via LPCAT3 also counteracts lipid-induced ER stress response and inflammation, likely by modulating SRC kinase membrane compartmentalization and limiting the synthesis of lipid inflammatory mediators. Plays an anti-inflammatory role during the hepatic acute phase response by acting as a corepressor: inhibits the hepatic acute phase response by preventing dissociation of the N-Cor corepressor complex. In Mus musculus (Mouse), this protein is Oxysterols receptor LXR-beta (Nr1h2).